The sequence spans 208 residues: Ribosomal RNA small subunit methyltransferase G (208 aa).

S-adenosyl-L-methionine contacts are provided by residues Gly73, Leu78, Val124 to Glu125, and Arg139.

It belongs to the methyltransferase superfamily. RNA methyltransferase RsmG family.

It localises to the cytoplasm. It carries out the reaction guanosine(527) in 16S rRNA + S-adenosyl-L-methionine = N(7)-methylguanosine(527) in 16S rRNA + S-adenosyl-L-homocysteine. In terms of biological role, specifically methylates the N7 position of guanine in position 527 of 16S rRNA. The polypeptide is Ribosomal RNA small subunit methyltransferase G (Aeromonas salmonicida (strain A449)).